Reading from the N-terminus, the 430-residue chain is Pyrroloquinoline quinone-dependent sugar dehydrogenase (430 aa).

A signal peptide spans 1-23 (MARLAPHTLLLALFVFLFGSCTA). N-linked (GlcNAc...) asparagine glycosylation is present at asparagine 25. Pyrroloquinoline quinone is bound at residue arginine 57. N-linked (GlcNAc...) asparagine glycans are attached at residues asparagine 94 and asparagine 147. Histidine 153 serves as a coordination point for pyrroloquinoline quinone. N-linked (GlcNAc...) asparagine glycosylation is present at asparagine 184. Arginine 220 contacts pyrroloquinoline quinone. 2 residues coordinate Ca(2+): serine 240 and aspartate 242. A disulfide bridge links cysteine 281 with cysteine 316. Asparagine 306 carries an N-linked (GlcNAc...) asparagine glycan. Histidine 330 is a binding site for pyrroloquinoline quinone. Asparagine 341 carries N-linked (GlcNAc...) asparagine glycosylation. Histidine 350 contributes to the pyrroloquinoline quinone binding site. A disulfide bond links cysteine 388 and cysteine 392.

Belongs to the sugar dehydrogenase AA12 family. It depends on Ca(2+) as a cofactor. Pyrroloquinoline quinone serves as cofactor.

It localises to the secreted. Pyrroloquinoline quinone (PPQ)-dependent oxidoreductase that catalyzes the oxidation of various sugars such as L-fucose. This chain is Pyrroloquinoline quinone-dependent sugar dehydrogenase, found in Hypocrea jecorina (strain QM6a) (Trichoderma reesei).